The sequence spans 143 residues: Sperm mitochondrial-associated cysteine-rich protein (143 aa).

Phosphoserine is present on residues S37, S44, and S110. The interval 101–143 is disordered; it reads CCSSENKTESDSDTSGQTLEKGSQSPQSPPGAQGNWNQKKSNK. Positions 113–126 are enriched in polar residues; it reads DTSGQTLEKGSQSP. S128 carries the post-translational modification Phosphoserine. The segment covering 134–143 has biased composition (polar residues); it reads GNWNQKKSNK.

Testis. Is selectively expressed in the spermatids of seminiferous tubules.

It localises to the cytoplasm. It is found in the mitochondrion membrane. In terms of biological role, involved in sperm motility. Its absence is associated with genetic background dependent male infertility. Infertility may be due to reduced sperm motility in the female reproductive tract and inability to penetrate the oocyte zona pellucida. This is Sperm mitochondrial-associated cysteine-rich protein (Smcp) from Mus musculus (Mouse).